The following is a 96-amino-acid chain: Acylphosphatase (96 aa).

The 88-residue stretch at 4 to 91 (RVHVYVKGKV…GEFDDFRILY (88 aa)) folds into the Acylphosphatase-like domain. Catalysis depends on residues arginine 19 and asparagine 37.

This sequence belongs to the acylphosphatase family.

It carries out the reaction an acyl phosphate + H2O = a carboxylate + phosphate + H(+). This is Acylphosphatase (acyP) from Syntrophus aciditrophicus (strain SB).